The primary structure comprises 259 residues: Pimeloyl-[acyl-carrier protein] methyl ester esterase (259 aa).

The 229-residue stretch at leucine 16–proline 244 folds into the AB hydrolase-1 domain. Substrate contacts are provided by residues tryptophan 22, serine 82 to leucine 83, and phenylalanine 143 to glutamine 147. The active-site Nucleophile is the serine 82. Active-site residues include aspartate 207 and histidine 237. Histidine 237 lines the substrate pocket.

Belongs to the AB hydrolase superfamily. Carboxylesterase BioH family. Monomer.

The protein localises to the cytoplasm. It catalyses the reaction 6-carboxyhexanoyl-[ACP] methyl ester + H2O = 6-carboxyhexanoyl-[ACP] + methanol + H(+). Its pathway is cofactor biosynthesis; biotin biosynthesis. Functionally, the physiological role of BioH is to remove the methyl group introduced by BioC when the pimeloyl moiety is complete. It allows to synthesize pimeloyl-ACP via the fatty acid synthetic pathway through the hydrolysis of the ester bonds of pimeloyl-ACP esters. The protein is Pimeloyl-[acyl-carrier protein] methyl ester esterase of Wigglesworthia glossinidia brevipalpis.